We begin with the raw amino-acid sequence, 85 residues long: MAHKKAGGSTRNGRDSESKRLGVKRFGGETVTAGSIIVRQRGTRVHPGENVGLGKDHTLFAKVEGAVKFEVKGPNNRKYVSIVAA.

A disordered region spans residues 1 to 26; the sequence is MAHKKAGGSTRNGRDSESKRLGVKRF.

This sequence belongs to the bacterial ribosomal protein bL27 family.

This Saccharophagus degradans (strain 2-40 / ATCC 43961 / DSM 17024) protein is Large ribosomal subunit protein bL27.